Reading from the N-terminus, the 177-residue chain is CDP-archaeol synthase (177 aa).

Helical transmembrane passes span 6–26, 54–74, 90–110, 124–144, and 148–168; these read LFASLWYILPAYVANASACIF, CIFGILCGTLVGLIQGILVDF, VILAFFLSVGAIVGDAVGSFI, LLDQLDFVIGALAFGYIVAPI, and MIIIICLFTVFVHLLGNIIAY.

Belongs to the CDP-archaeol synthase family. The cofactor is Mg(2+).

It is found in the cell membrane. The enzyme catalyses 2,3-bis-O-(geranylgeranyl)-sn-glycerol 1-phosphate + CTP + H(+) = CDP-2,3-bis-O-(geranylgeranyl)-sn-glycerol + diphosphate. It participates in membrane lipid metabolism; glycerophospholipid metabolism. Functionally, catalyzes the formation of CDP-2,3-bis-(O-geranylgeranyl)-sn-glycerol (CDP-archaeol) from 2,3-bis-(O-geranylgeranyl)-sn-glycerol 1-phosphate (DGGGP) and CTP. This reaction is the third ether-bond-formation step in the biosynthesis of archaeal membrane lipids. This is CDP-archaeol synthase from Methanocaldococcus jannaschii (strain ATCC 43067 / DSM 2661 / JAL-1 / JCM 10045 / NBRC 100440) (Methanococcus jannaschii).